A 56-amino-acid polypeptide reads, in one-letter code: Potassium channel toxin alpha-KTx 9.8 (56 aa).

Residues 1 to 19 (MSRLFTLVLIVLAMNVMMA) form the signal peptide. A propeptide spanning residues 20–28 (IISDPVVEA) is cleaved from the precursor. 3 disulfides stabilise this stretch: C31-C47, C34-C52, and C38-C54.

It belongs to the short scorpion toxin superfamily. Potassium channel inhibitor family. Alpha-KTx 09 subfamily. In terms of tissue distribution, expressed by the venom gland.

It is found in the secreted. Potassium channel inhibitor. This Buthus israelis (Israeli scorpion) protein is Potassium channel toxin alpha-KTx 9.8.